Here is a 433-residue protein sequence, read N- to C-terminus: 3-phosphoshikimate 1-carboxyvinyltransferase (433 aa).

3-phosphoshikimate contacts are provided by Lys-22, Ser-23, and Arg-27. Lys-22 contacts phosphoenolpyruvate. Gly-95 and Arg-123 together coordinate phosphoenolpyruvate. 3-phosphoshikimate is bound by residues Ser-167, Gln-169, Asp-315, and Lys-342. Gln-169 serves as a coordination point for phosphoenolpyruvate. Asp-315 functions as the Proton acceptor in the catalytic mechanism. Residues Arg-346 and Arg-387 each contribute to the phosphoenolpyruvate site.

This sequence belongs to the EPSP synthase family. As to quaternary structure, monomer.

It localises to the cytoplasm. The catalysed reaction is 3-phosphoshikimate + phosphoenolpyruvate = 5-O-(1-carboxyvinyl)-3-phosphoshikimate + phosphate. The protein operates within metabolic intermediate biosynthesis; chorismate biosynthesis; chorismate from D-erythrose 4-phosphate and phosphoenolpyruvate: step 6/7. Functionally, catalyzes the transfer of the enolpyruvyl moiety of phosphoenolpyruvate (PEP) to the 5-hydroxyl of shikimate-3-phosphate (S3P) to produce enolpyruvyl shikimate-3-phosphate and inorganic phosphate. This is 3-phosphoshikimate 1-carboxyvinyltransferase from Legionella pneumophila (strain Corby).